The chain runs to 362 residues: tRNA/tmRNA (uracil-C(5))-methyltransferase (362 aa).

Residues Gln-186, Tyr-214, Asn-219, Glu-235, and Asp-295 each contribute to the S-adenosyl-L-methionine site. Catalysis depends on Cys-320, which acts as the Nucleophile. Residue Glu-354 is the Proton acceptor of the active site.

The protein belongs to the class I-like SAM-binding methyltransferase superfamily. RNA M5U methyltransferase family. TrmA subfamily.

It carries out the reaction uridine(54) in tRNA + S-adenosyl-L-methionine = 5-methyluridine(54) in tRNA + S-adenosyl-L-homocysteine + H(+). It catalyses the reaction uridine(341) in tmRNA + S-adenosyl-L-methionine = 5-methyluridine(341) in tmRNA + S-adenosyl-L-homocysteine + H(+). Functionally, dual-specificity methyltransferase that catalyzes the formation of 5-methyluridine at position 54 (m5U54) in all tRNAs, and that of position 341 (m5U341) in tmRNA (transfer-mRNA). In Stutzerimonas stutzeri (strain A1501) (Pseudomonas stutzeri), this protein is tRNA/tmRNA (uracil-C(5))-methyltransferase.